The following is a 179-amino-acid chain: Large ribosomal subunit protein uL6 (179 aa).

The protein belongs to the universal ribosomal protein uL6 family. In terms of assembly, part of the 50S ribosomal subunit.

In terms of biological role, this protein binds to the 23S rRNA, and is important in its secondary structure. It is located near the subunit interface in the base of the L7/L12 stalk, and near the tRNA binding site of the peptidyltransferase center. The chain is Large ribosomal subunit protein uL6 from Solidesulfovibrio magneticus (strain ATCC 700980 / DSM 13731 / RS-1) (Desulfovibrio magneticus).